We begin with the raw amino-acid sequence, 351 residues long: Molybdenum import ATP-binding protein ModC (351 aa).

One can recognise an ABC transporter domain in the interval 1–229 (MLEINIHQQL…DILADWQSET (229 aa)). Residue 31–38 (GRSGAGKS) coordinates ATP. The 62-residue stretch at 290–351 (HSSIRNILNG…IYVQIKSVSL (62 aa)) folds into the Mop domain.

It belongs to the ABC transporter superfamily. Molybdate importer (TC 3.A.1.8) family. As to quaternary structure, the complex is composed of two ATP-binding proteins (ModC), two transmembrane proteins (ModB) and a solute-binding protein (ModA).

It localises to the cell inner membrane. It catalyses the reaction molybdate(out) + ATP + H2O = molybdate(in) + ADP + phosphate + H(+). Functionally, part of the ABC transporter complex ModABC involved in molybdenum import. Responsible for energy coupling to the transport system. This is Molybdenum import ATP-binding protein ModC from Haemophilus ducreyi (strain 35000HP / ATCC 700724).